Here is a 138-residue protein sequence, read N- to C-terminus: Acidic phospholipase A2 PL1 (138 aa).

Positions 1–16 (MRALWIVAVCLIGAEG) are cleaved as a signal peptide. 7 disulfide bridges follow: Cys42/Cys131, Cys44/Cys60, Cys59/Cys111, Cys65/Cys138, Cys66/Cys104, Cys73/Cys97, and Cys91/Cys102. Ca(2+) is bound by residues Tyr43, Gly45, and Gly47. The active site involves His63. Asp64 serves as a coordination point for Ca(2+). Residue Asp105 is part of the active site.

It belongs to the phospholipase A2 family. Group II subfamily. D49 sub-subfamily. Requires Ca(2+) as cofactor. Expressed by the venom gland.

It localises to the secreted. The catalysed reaction is a 1,2-diacyl-sn-glycero-3-phosphocholine + H2O = a 1-acyl-sn-glycero-3-phosphocholine + a fatty acid + H(+). PLA2 catalyzes the calcium-dependent hydrolysis of the 2-acyl groups in 3-sn-phosphoglycerides. The chain is Acidic phospholipase A2 PL1 from Vipera renardi (Steppe viper).